Reading from the N-terminus, the 174-residue chain is Single-stranded DNA-binding protein 1 (174 aa).

One can recognise an SSB domain in the interval 6–111; that stretch reads VNKVILVGNL…VVVNVGGTMQ (106 aa). Residues 55 to 61 mediate DNA binding; the sequence is WHRVVLF. The tract at residues 110 to 174 is disordered; that stretch reads MQMLGGRQGG…PMDFDDDIPF (65 aa). Residues 115-133 are compositionally biased toward gly residues; that stretch reads GRQGGGAPAGGGQQQGGWG. Positions 134–160 are enriched in low complexity; the sequence is QPQQPQGGNQFSGGAQSRPQQQAPAAP. The short motif at 169–174 is the Important for interaction with partner proteins element; that stretch reads DDDIPF.

As to quaternary structure, homotetramer. Binds PriA via its C-terminus.

In terms of biological role, plays an important role in DNA replication, recombination and repair. Binds to ssDNA and to an array of partner proteins to recruit them to their sites of action during DNA metabolism. Stimulates the ATPase activity of PriA. One tetramer binds to 26 nucleotides (nt) of ssDNA, a 55 nt piece of ssDNA probably binds 2 tetramers. This chain is Single-stranded DNA-binding protein 1, found in Klebsiella pneumoniae subsp. pneumoniae (strain ATCC 700721 / MGH 78578).